We begin with the raw amino-acid sequence, 166 residues long: Regulatory protein RecX (166 aa).

This sequence belongs to the RecX family.

Its subcellular location is the cytoplasm. Modulates RecA activity. The chain is Regulatory protein RecX from Shigella boydii serotype 4 (strain Sb227).